A 300-amino-acid polypeptide reads, in one-letter code: Homoserine kinase (300 aa).

Position 87–97 (87–97 (PISRGLGSSSA)) interacts with ATP.

It belongs to the GHMP kinase family. Homoserine kinase subfamily.

The protein resides in the cytoplasm. It catalyses the reaction L-homoserine + ATP = O-phospho-L-homoserine + ADP + H(+). It functions in the pathway amino-acid biosynthesis; L-threonine biosynthesis; L-threonine from L-aspartate: step 4/5. Catalyzes the ATP-dependent phosphorylation of L-homoserine to L-homoserine phosphate. This Clostridium kluyveri (strain ATCC 8527 / DSM 555 / NBRC 12016 / NCIMB 10680 / K1) protein is Homoserine kinase.